Consider the following 357-residue polypeptide: Guanine nucleotide-binding protein alpha-1 subunit (357 aa).

The N-myristoyl glycine moiety is linked to residue G2. The S-palmitoyl cysteine moiety is linked to residue C4. In terms of domain architecture, G-alpha spans 32 to 357 (NVIKLLLLGA…SSKLKGCGLF (326 aa)). Residues 35–48 (KLLLLGAGESGKST) form a G1 motif region. GTP is bound by residues E43, S44, G45, K46, S47, T48, D151, L176, T182, G204, N270, K271, D273, and A329. S47 lines the Mg(2+) pocket. Residues 174 to 182 (DILHTRVPT) are G2 motif. T182 contacts Mg(2+). The segment at 197–206 (FRVFDVGGQR) is G3 motif. The segment at 266–273 (ILFLNKVD) is G4 motif. A G5 motif region spans residues 327-332 (TCATDT).

Belongs to the G-alpha family. G(q) subfamily. G proteins are composed of 3 units; alpha, beta and gamma. The alpha chain contains the guanine nucleotide binding site. Mg(2+) is required as a cofactor.

Its function is as follows. Guanine nucleotide-binding proteins (G proteins) are involved as modulators or transducers in various transmembrane signaling systems. The polypeptide is Guanine nucleotide-binding protein alpha-1 subunit (gpa-1) (Caenorhabditis briggsae).